Reading from the N-terminus, the 274-residue chain is Dermonecrotic toxin SdSicTox-betaIIB1biv (274 aa).

His5 is an active-site residue. The Mg(2+) site is built by Glu25 and Asp27. The active-site Nucleophile is the His41. 2 disulfide bridges follow: Cys45/Cys51 and Cys47/Cys190. Residue Asp85 participates in Mg(2+) binding.

Belongs to the arthropod phospholipase D family. Class II subfamily. Mg(2+) serves as cofactor. In terms of tissue distribution, expressed by the venom gland.

Its subcellular location is the secreted. It catalyses the reaction an N-(acyl)-sphingosylphosphocholine = an N-(acyl)-sphingosyl-1,3-cyclic phosphate + choline. The catalysed reaction is an N-(acyl)-sphingosylphosphoethanolamine = an N-(acyl)-sphingosyl-1,3-cyclic phosphate + ethanolamine. It carries out the reaction a 1-acyl-sn-glycero-3-phosphocholine = a 1-acyl-sn-glycero-2,3-cyclic phosphate + choline. The enzyme catalyses a 1-acyl-sn-glycero-3-phosphoethanolamine = a 1-acyl-sn-glycero-2,3-cyclic phosphate + ethanolamine. In terms of biological role, dermonecrotic toxins cleave the phosphodiester linkage between the phosphate and headgroup of certain phospholipids (sphingolipid and lysolipid substrates), forming an alcohol (often choline) and a cyclic phosphate. This toxin acts on sphingomyelin (SM). It may also act on ceramide phosphoethanolamine (CPE), lysophosphatidylcholine (LPC) and lysophosphatidylethanolamine (LPE), but not on lysophosphatidylserine (LPS), and lysophosphatidylglycerol (LPG). It acts by transphosphatidylation, releasing exclusively cyclic phosphate products as second products. Induces dermonecrosis, hemolysis, increased vascular permeability, edema, inflammatory response, and platelet aggregation. The polypeptide is Dermonecrotic toxin SdSicTox-betaIIB1biv (Sicarius cf. damarensis (strain GJB-2008) (Six-eyed sand spider)).